Consider the following 180-residue polypeptide: Protein GrpE (180 aa).

Residues 1–19 (MAEKKRAQEQEKVQEDQKM) show a composition bias toward basic and acidic residues. The interval 1-25 (MAEKKRAQEQEKVQEDQKMQNEQNE) is disordered.

It belongs to the GrpE family. In terms of assembly, homodimer.

Its subcellular location is the cytoplasm. In terms of biological role, participates actively in the response to hyperosmotic and heat shock by preventing the aggregation of stress-denatured proteins, in association with DnaK and GrpE. It is the nucleotide exchange factor for DnaK and may function as a thermosensor. Unfolded proteins bind initially to DnaJ; upon interaction with the DnaJ-bound protein, DnaK hydrolyzes its bound ATP, resulting in the formation of a stable complex. GrpE releases ADP from DnaK; ATP binding to DnaK triggers the release of the substrate protein, thus completing the reaction cycle. Several rounds of ATP-dependent interactions between DnaJ, DnaK and GrpE are required for fully efficient folding. The polypeptide is Protein GrpE (Nitratiruptor sp. (strain SB155-2)).